We begin with the raw amino-acid sequence, 202 residues long: ATP-dependent Clp protease proteolytic subunit (202 aa).

S106 acts as the Nucleophile in catalysis. Residue H131 is part of the active site.

It belongs to the peptidase S14 family. Fourteen ClpP subunits assemble into 2 heptameric rings which stack back to back to give a disk-like structure with a central cavity, resembling the structure of eukaryotic proteasomes.

The protein resides in the cytoplasm. The enzyme catalyses Hydrolysis of proteins to small peptides in the presence of ATP and magnesium. alpha-casein is the usual test substrate. In the absence of ATP, only oligopeptides shorter than five residues are hydrolyzed (such as succinyl-Leu-Tyr-|-NHMec, and Leu-Tyr-Leu-|-Tyr-Trp, in which cleavage of the -Tyr-|-Leu- and -Tyr-|-Trp bonds also occurs).. Cleaves peptides in various proteins in a process that requires ATP hydrolysis. Has a chymotrypsin-like activity. Plays a major role in the degradation of misfolded proteins. In Shewanella sp. (strain W3-18-1), this protein is ATP-dependent Clp protease proteolytic subunit.